A 146-amino-acid polypeptide reads, in one-letter code: Anti-sigma F factor (146 aa).

This sequence belongs to the anti-sigma-factor family.

The catalysed reaction is L-seryl-[protein] + ATP = O-phospho-L-seryl-[protein] + ADP + H(+). It carries out the reaction L-threonyl-[protein] + ATP = O-phospho-L-threonyl-[protein] + ADP + H(+). Its function is as follows. Binds to sigma F and blocks its ability to form an RNA polymerase holoenzyme (E-sigma F). Phosphorylates SpoIIAA on a serine residue. This phosphorylation may enable SpoIIAA to act as an anti-anti-sigma factor that counteracts SpoIIAB and thus releases sigma F from inhibition. This Bacillus cereus (strain ATCC 14579 / DSM 31 / CCUG 7414 / JCM 2152 / NBRC 15305 / NCIMB 9373 / NCTC 2599 / NRRL B-3711) protein is Anti-sigma F factor.